The chain runs to 354 residues: UDP-N-acetylglucosamine--N-acetylmuramyl-(pentapeptide) pyrophosphoryl-undecaprenol N-acetylglucosamine transferase (354 aa).

Residues 12 to 14 (TGG), N124, R163, S187, I240, and Q285 contribute to the UDP-N-acetyl-alpha-D-glucosamine site.

It belongs to the glycosyltransferase 28 family. MurG subfamily.

The protein resides in the cell inner membrane. The catalysed reaction is di-trans,octa-cis-undecaprenyl diphospho-N-acetyl-alpha-D-muramoyl-L-alanyl-D-glutamyl-meso-2,6-diaminopimeloyl-D-alanyl-D-alanine + UDP-N-acetyl-alpha-D-glucosamine = di-trans,octa-cis-undecaprenyl diphospho-[N-acetyl-alpha-D-glucosaminyl-(1-&gt;4)]-N-acetyl-alpha-D-muramoyl-L-alanyl-D-glutamyl-meso-2,6-diaminopimeloyl-D-alanyl-D-alanine + UDP + H(+). It functions in the pathway cell wall biogenesis; peptidoglycan biosynthesis. Functionally, cell wall formation. Catalyzes the transfer of a GlcNAc subunit on undecaprenyl-pyrophosphoryl-MurNAc-pentapeptide (lipid intermediate I) to form undecaprenyl-pyrophosphoryl-MurNAc-(pentapeptide)GlcNAc (lipid intermediate II). In Methylococcus capsulatus (strain ATCC 33009 / NCIMB 11132 / Bath), this protein is UDP-N-acetylglucosamine--N-acetylmuramyl-(pentapeptide) pyrophosphoryl-undecaprenol N-acetylglucosamine transferase.